Here is a 72-residue protein sequence, read N- to C-terminus: Putative snRNP Sm-like protein (72 aa).

The region spanning Arg-4–Pro-72 is the Sm domain.

The protein belongs to the snRNP Sm proteins family.

The sequence is that of Putative snRNP Sm-like protein from Methanococcoides burtonii (strain DSM 6242 / NBRC 107633 / OCM 468 / ACE-M).